A 342-amino-acid polypeptide reads, in one-letter code: Deoxyguanosinetriphosphate triphosphohydrolase-like protein (342 aa).

The HD domain occupies 75–190 (RLVHTLEVSQ…VRFADKIAYV (116 aa)).

Belongs to the dGTPase family. Type 2 subfamily.

This chain is Deoxyguanosinetriphosphate triphosphohydrolase-like protein, found in Clostridium perfringens (strain 13 / Type A).